A 356-amino-acid chain; its full sequence is 3-dehydroquinate synthase (356 aa).

NAD(+) is bound by residues 106–110 (GVVGD), 130–131 (TT), Lys-143, and Lys-152. Positions 185, 248, and 265 each coordinate Zn(2+).

It belongs to the sugar phosphate cyclases superfamily. Dehydroquinate synthase family. Requires Co(2+) as cofactor. Zn(2+) serves as cofactor. The cofactor is NAD(+).

It localises to the cytoplasm. The catalysed reaction is 7-phospho-2-dehydro-3-deoxy-D-arabino-heptonate = 3-dehydroquinate + phosphate. It functions in the pathway metabolic intermediate biosynthesis; chorismate biosynthesis; chorismate from D-erythrose 4-phosphate and phosphoenolpyruvate: step 2/7. Functionally, catalyzes the conversion of 3-deoxy-D-arabino-heptulosonate 7-phosphate (DAHP) to dehydroquinate (DHQ). The chain is 3-dehydroquinate synthase from Thermoanaerobacter sp. (strain X514).